We begin with the raw amino-acid sequence, 260 residues long: Acetylglutamate kinase (260 aa).

Substrate is bound by residues 45 to 46 (GG), arginine 67, and asparagine 159.

This sequence belongs to the acetylglutamate kinase family. ArgB subfamily.

The protein localises to the cytoplasm. The enzyme catalyses N-acetyl-L-glutamate + ATP = N-acetyl-L-glutamyl 5-phosphate + ADP. It functions in the pathway amino-acid biosynthesis; L-arginine biosynthesis; N(2)-acetyl-L-ornithine from L-glutamate: step 2/4. Functionally, catalyzes the ATP-dependent phosphorylation of N-acetyl-L-glutamate. The sequence is that of Acetylglutamate kinase from Aliivibrio fischeri (strain ATCC 700601 / ES114) (Vibrio fischeri).